We begin with the raw amino-acid sequence, 217 residues long: Translation initiation factor IF-3 (217 aa).

The protein belongs to the IF-3 family. In terms of assembly, monomer.

It is found in the cytoplasm. In terms of biological role, IF-3 binds to the 30S ribosomal subunit and shifts the equilibrium between 70S ribosomes and their 50S and 30S subunits in favor of the free subunits, thus enhancing the availability of 30S subunits on which protein synthesis initiation begins. This is Translation initiation factor IF-3 from Synechococcus sp. (strain CC9902).